A 539-amino-acid chain; its full sequence is Chaperonin GroEL 2 (539 aa).

ATP is bound by residues T29–P32, D86–T90, G414, D479–L481, and D495.

This sequence belongs to the chaperonin (HSP60) family. In terms of assembly, forms a cylinder of 14 subunits composed of two heptameric rings stacked back-to-back. Interacts with the co-chaperonin GroES.

It localises to the cytoplasm. The catalysed reaction is ATP + H2O + a folded polypeptide = ADP + phosphate + an unfolded polypeptide.. Functionally, together with its co-chaperonin GroES, plays an essential role in assisting protein folding. The GroEL-GroES system forms a nano-cage that allows encapsulation of the non-native substrate proteins and provides a physical environment optimized to promote and accelerate protein folding. The polypeptide is Chaperonin GroEL 2 (Synechococcus sp. (strain JA-2-3B'a(2-13)) (Cyanobacteria bacterium Yellowstone B-Prime)).